A 510-amino-acid polypeptide reads, in one-letter code: Fumarate hydratase, mitochondrial (510 aa).

Residues 1–44 constitute a mitochondrion transit peptide; it reads MYRALWLLARSRRLVRPPASALASAPGLSGAAVPSFWPPNAARM. An N6-acetyllysine; alternate mark is found at K61, K66, and K80. An N6-succinyllysine; alternate mark is found at K61, K66, and K80. Residues T85 and T90 each carry the phosphothreonine modification. An N6-acetyllysine modification is found at K94. K115 and K122 each carry N6-acetyllysine; alternate. K115 and K122 each carry N6-succinyllysine; alternate. Residues 145–147, 176–179, and 186–188 contribute to the substrate site; these read SGT, HPND, and SSN. An N6-acetyllysine modification is found at K213. N6-acetyllysine; alternate is present on K223. N6-succinyllysine; alternate is present on K223. Substrate is bound at residue T234. Catalysis depends on H235, which acts as the Proton donor/acceptor. T236 carries the post-translational modification Phosphothreonine. Residue K256 is modified to N6-acetyllysine. An N6-acetyllysine; alternate modification is found at K292. K292 carries the post-translational modification N6-succinyllysine; alternate. S365 is a catalytic residue. Substrate-binding positions include S366 and 371–373; that span reads KVN. Position 366 is a phosphoserine (S366). An N6-succinyllysine mark is found at K467 and K473. K502 bears the N6-acetyllysine mark.

It belongs to the class-II fumarase/aspartase family. Fumarase subfamily. Homotetramer. Interacts with H2AZ1. In terms of processing, phosphorylation at Thr-236 by PRKDC in response to DNA damage promotes translocation to the nucleus and recruitment to DNA double-strand breaks (DSBs).

The protein resides in the mitochondrion. The protein localises to the cytoplasm. It is found in the cytosol. Its subcellular location is the nucleus. It localises to the chromosome. The enzyme catalyses (S)-malate = fumarate + H2O. It functions in the pathway carbohydrate metabolism; tricarboxylic acid cycle; (S)-malate from fumarate: step 1/1. Functionally, catalyzes the reversible stereospecific interconversion of fumarate to L-malate. Experiments in other species have demonstrated that specific isoforms of this protein act in defined pathways and favor one direction over the other. Catalyzes the hydration of fumarate to L-malate in the tricarboxylic acid (TCA) cycle to facilitate a transition step in the production of energy in the form of NADH. Its function is as follows. Catalyzes the dehydration of L-malate to fumarate. Fumarate metabolism in the cytosol plays a role during urea cycle and arginine metabolism; fumarate being a by-product of the urea cycle and amino-acid catabolism. Also plays a role in DNA repair by promoting non-homologous end-joining (NHEJ). In response to DNA damage and phosphorylation by PRKDC, translocates to the nucleus and accumulates at DNA double-strand breaks (DSBs): acts by catalyzing formation of fumarate, an inhibitor of KDM2B histone demethylase activity, resulting in enhanced dimethylation of histone H3 'Lys-36' (H3K36me2). This chain is Fumarate hydratase, mitochondrial, found in Macaca fascicularis (Crab-eating macaque).